The chain runs to 540 residues: Isocitrate lyase (540 aa).

103–105 provides a ligand contact to substrate; the sequence is SGW. Asp187 serves as a coordination point for Mg(2+). Cys225 (proton acceptor) is an active-site residue. Substrate-binding positions include 226–227, 385–389, and Thr458; these read GH and NNSPS.

This sequence belongs to the isocitrate lyase/PEP mutase superfamily. Isocitrate lyase family. In terms of assembly, homotetramer. Mg(2+) serves as cofactor.

The catalysed reaction is D-threo-isocitrate = glyoxylate + succinate. It functions in the pathway carbohydrate metabolism; glyoxylate cycle; (S)-malate from isocitrate: step 1/2. Its pathway is one-carbon metabolism; formaldehyde assimilation via serine pathway. Its activity is regulated as follows. In the presence of magnesium, inhibited by oxalate, potassium cyanide, manganese, silver, cadmium and to a lesser extent by succinate, glycolate, iodoacetamide, DL-penicillamine, aluminum, sodium, potassium, lithium and strontium. Involved in the metabolic adaptation in response to environmental changes. Catalyzes the reversible formation of succinate and glyoxylate from isocitrate, a key step of the glyoxylate cycle, which operates as an anaplerotic route for replenishing the tricarboxylic acid cycle during growth on fatty acid substrates. May be involved in the assimilation of one-carbon compounds via the isocitrate lyase-positive serine pathway. In Hyphomicrobium methylovorum, this protein is Isocitrate lyase.